Here is a 952-residue protein sequence, read N- to C-terminus: Eukaryotic translation initiation factor 3 subunit A (952 aa).

Positions 315–491 constitute a PCI domain; that stretch reads HAERAGIVND…QTITFVSTPP (177 aa). Residues 522-849 adopt a coiled-coil conformation; that stretch reads DAFAAAIAQA…RRQAEKAAAT (328 aa). A compositionally biased stretch (basic and acidic residues) spans 757 to 797; the sequence is EKVIKRKREEKERKLKEAREAEERKRKEEEEAAQKAEEEAR. A disordered region spans residues 757 to 952; it reads EKVIKRKREE…RGMPSTRGGA (196 aa). Over residues 798–809 the composition is skewed to low complexity; sequence AAAALEAEAAAA. Basic and acidic residues predominate over residues 810 to 844; the sequence is EQRRAEREAQRQSDLERIRAQQEREEEALRRRQAE. Low complexity-rich tracts occupy residues 856 to 878 and 893 to 918; these read RPPARAGTTPPTASPAPSSGGPS and GAPVASSPKPVPSNSAAASAPASNGP.

It belongs to the eIF-3 subunit A family. In terms of assembly, component of the eukaryotic translation initiation factor 3 (eIF-3) complex.

The protein resides in the cytoplasm. Its function is as follows. RNA-binding component of the eukaryotic translation initiation factor 3 (eIF-3) complex, which is involved in protein synthesis of a specialized repertoire of mRNAs and, together with other initiation factors, stimulates binding of mRNA and methionyl-tRNAi to the 40S ribosome. The eIF-3 complex specifically targets and initiates translation of a subset of mRNAs involved in cell proliferation. The polypeptide is Eukaryotic translation initiation factor 3 subunit A (Cryptococcus neoformans var. neoformans serotype D (strain B-3501A) (Filobasidiella neoformans)).